Consider the following 397-residue polypeptide: Pentatricopeptide repeat-containing protein At1g80150, mitochondrial (397 aa).

A mitochondrion-targeting transit peptide spans 1–81; it reads MLSLRHIRRF…FAFEDTVSRL (81 aa). PPR repeat units follow at residues 105–139, 140–170, 176–210, 211–245, 246–280, 281–315, 316–350, and 351–381; these read REGF…GCKR, SVKS…APSK, DAVS…GLTP, DVVT…GCKP, NLTT…QVEP, DSIT…GYKP, NLKI…KWYP, and NLDT…VHRR.

It belongs to the PPR family. P subfamily.

It is found in the mitochondrion. The protein is Pentatricopeptide repeat-containing protein At1g80150, mitochondrial of Arabidopsis thaliana (Mouse-ear cress).